Consider the following 376-residue polypeptide: Ribonucleoside-diphosphate reductase 1 subunit beta (376 aa).

Positions 85, 116, and 119 each coordinate Fe cation. Tyr123 is an active-site residue. 3 residues coordinate Fe cation: Glu205, Glu239, and His242.

The protein belongs to the ribonucleoside diphosphate reductase small chain family. As to quaternary structure, tetramer of two alpha (R1) and two beta (R2) subunits. The B1 protein is a dimer of alpha subunits. A radical transfer pathway occurs between Tyr-123 of R2 and R1. It depends on Fe cation as a cofactor.

It carries out the reaction a 2'-deoxyribonucleoside 5'-diphosphate + [thioredoxin]-disulfide + H2O = a ribonucleoside 5'-diphosphate + [thioredoxin]-dithiol. Its function is as follows. Provides the precursors necessary for DNA synthesis. Catalyzes the biosynthesis of deoxyribonucleotides from the corresponding ribonucleotides. R2 contains the tyrosyl radical required for catalysis. The sequence is that of Ribonucleoside-diphosphate reductase 1 subunit beta (nrdB) from Escherichia coli O157:H7.